The following is a 206-amino-acid chain: Urease accessory protein UreG (206 aa).

Residue 13-20 (GPVGSGKT) coordinates GTP.

This sequence belongs to the SIMIBI class G3E GTPase family. UreG subfamily. As to quaternary structure, homodimer. UreD, UreF and UreG form a complex that acts as a GTP-hydrolysis-dependent molecular chaperone, activating the urease apoprotein by helping to assemble the nickel containing metallocenter of UreC. The UreE protein probably delivers the nickel.

The protein localises to the cytoplasm. Facilitates the functional incorporation of the urease nickel metallocenter. This process requires GTP hydrolysis, probably effectuated by UreG. The chain is Urease accessory protein UreG from Natronomonas pharaonis (strain ATCC 35678 / DSM 2160 / CIP 103997 / JCM 8858 / NBRC 14720 / NCIMB 2260 / Gabara) (Halobacterium pharaonis).